The sequence spans 252 residues: 3-dehydroquinate dehydratase (252 aa).

3-dehydroquinate-binding positions include Ser21, 46–48 (EWR), and Arg82. Residue His143 is the Proton donor/acceptor of the active site. Residue Lys170 is the Schiff-base intermediate with substrate of the active site. Residues Arg213, Ser232, and Gln236 each contribute to the 3-dehydroquinate site.

This sequence belongs to the type-I 3-dehydroquinase family. As to quaternary structure, homodimer.

The enzyme catalyses 3-dehydroquinate = 3-dehydroshikimate + H2O. Its pathway is metabolic intermediate biosynthesis; chorismate biosynthesis; chorismate from D-erythrose 4-phosphate and phosphoenolpyruvate: step 3/7. Functionally, involved in the third step of the chorismate pathway, which leads to the biosynthesis of aromatic amino acids. Catalyzes the cis-dehydration of 3-dehydroquinate (DHQ) and introduces the first double bond of the aromatic ring to yield 3-dehydroshikimate. In Escherichia coli (strain 55989 / EAEC), this protein is 3-dehydroquinate dehydratase.